Consider the following 78-residue polypeptide: Putative antitoxin VapB4 (78 aa).

It belongs to the UPF0330 family.

Possibly the antitoxin component of a type II toxin-antitoxin (TA) system. Its cognate toxin is VapC4 (Potential). The chain is Putative antitoxin VapB4 (vapB4) from Pyrococcus furiosus (strain ATCC 43587 / DSM 3638 / JCM 8422 / Vc1).